The following is a 382-amino-acid chain: MAAQRPLTIALVAGETSGDILGAGLIRALKARVPNARFVGVAGPRMQAEGCEAWYEMEELAVMGIVEVLGRLRRLLHIRADLTRRFTELKPDVFVGIDAPDFNITLEGNLKKQGIKTIHYVSPSVWAWRQKRVFKIGRSTHMVLAFLPFEKAFYDKFNVPCRFIGHTMADAMPLDPDKNAARDVLGIPHDAHCLALLPGSRGAEVEMLSADFLKTAQLLRQRYPDLEVVVPLVNAKRREQFEKIKAEVAPDLAVHLLDGMAREAMIASDAALLASGTAALECMLAKCPMVVGYRMKSFTFWLAKRLVKTEYVSLPNLLAGRELVKELLQEECEPQKLAEALLPLLANGKTSHAMHDTFRELHQQIRCNADEQAADAVLELAQ.

This sequence belongs to the LpxB family.

It carries out the reaction 2-N,3-O-bis[(3R)-3-hydroxytetradecanoyl]-alpha-D-glucosaminyl 1-phosphate + UDP-2-N,3-O-bis[(3R)-3-hydroxytetradecanoyl]-alpha-D-glucosamine = lipid A disaccharide (E. coli) + UDP + H(+). The catalysed reaction is a lipid X + a UDP-2-N,3-O-bis[(3R)-3-hydroxyacyl]-alpha-D-glucosamine = a lipid A disaccharide + UDP + H(+). The protein operates within glycolipid biosynthesis; lipid IV(A) biosynthesis; lipid IV(A) from (3R)-3-hydroxytetradecanoyl-[acyl-carrier-protein] and UDP-N-acetyl-alpha-D-glucosamine: step 5/6. Functionally, condensation of UDP-2,3-diacylglucosamine and 2,3-diacylglucosamine-1-phosphate to form lipid A disaccharide, a precursor of lipid A, a phosphorylated glycolipid that anchors the lipopolysaccharide to the outer membrane of the cell. The sequence is that of Lipid-A-disaccharide synthase from Salmonella paratyphi A (strain AKU_12601).